The primary structure comprises 553 residues: uncharacterized protein (553 aa).

The N-terminal stretch at 1-31 (MEDIMTSLLVATSRVVVTISLAYVPVKSAFA) is a signal peptide. The active-site Acyl-ester intermediate is serine 207. Cysteine 275 and cysteine 292 form a disulfide bridge. Residues aspartate 276, aspartate 279, valine 281, aspartate 283, and leucine 285 each contribute to the Ca(2+) site. Active-site charge relay system residues include aspartate 444 and histidine 482. Cysteine 528 and cysteine 550 are disulfide-bonded.

It belongs to the tannase family.

This is an uncharacterized protein from Agrobacterium fabrum (strain C58 / ATCC 33970) (Agrobacterium tumefaciens (strain C58)).